The following is a 365-amino-acid chain: UDP-N-acetylglucosamine--N-acetylmuramyl-(pentapeptide) pyrophosphoryl-undecaprenol N-acetylglucosamine transferase (365 aa).

Residues 10 to 12, Asn128, Arg170, Ser199, Ile250, and Gln295 contribute to the UDP-N-acetyl-alpha-D-glucosamine site; that span reads TGG.

This sequence belongs to the glycosyltransferase 28 family. MurG subfamily.

Its subcellular location is the cell inner membrane. The enzyme catalyses di-trans,octa-cis-undecaprenyl diphospho-N-acetyl-alpha-D-muramoyl-L-alanyl-D-glutamyl-meso-2,6-diaminopimeloyl-D-alanyl-D-alanine + UDP-N-acetyl-alpha-D-glucosamine = di-trans,octa-cis-undecaprenyl diphospho-[N-acetyl-alpha-D-glucosaminyl-(1-&gt;4)]-N-acetyl-alpha-D-muramoyl-L-alanyl-D-glutamyl-meso-2,6-diaminopimeloyl-D-alanyl-D-alanine + UDP + H(+). It functions in the pathway cell wall biogenesis; peptidoglycan biosynthesis. Its function is as follows. Cell wall formation. Catalyzes the transfer of a GlcNAc subunit on undecaprenyl-pyrophosphoryl-MurNAc-pentapeptide (lipid intermediate I) to form undecaprenyl-pyrophosphoryl-MurNAc-(pentapeptide)GlcNAc (lipid intermediate II). This is UDP-N-acetylglucosamine--N-acetylmuramyl-(pentapeptide) pyrophosphoryl-undecaprenol N-acetylglucosamine transferase from Pelodictyon phaeoclathratiforme (strain DSM 5477 / BU-1).